Here is a 769-residue protein sequence, read N- to C-terminus: Intron Large complex component GCFC2 (769 aa).

Disordered stretches follow at residues 1–122 and 134–212; these read MALR…PIVE and RKRE…DENQ. Residues Ser-16, Ser-17, Ser-19, and Ser-85 each carry the phosphoserine modification. Phosphothreonine is present on Thr-86. 2 positions are modified to phosphoserine: Ser-118 and Ser-169. Positions 190–201 are enriched in basic and acidic residues; sequence RMAEETSIRSEE. The span at 202 to 212 shows a compositional bias: acidic residues; the sequence is SSEESQEDENQ. Phosphoserine occurs at positions 203 and 206. Residues 256–308 adopt a coiled-coil conformation; the sequence is NLEIIKKQLNNRLTLLQESHRSHQREYEKYEQDIKSSKTAIQNLESASDHAQN.

The protein belongs to the GCF family. In terms of assembly, found in the Intron Large (IL) complex, a post-mRNA release spliceosomal complex containing the excised intron, U2, U5 and U6 snRNPs, and splicing factors. Interacts with TFIP11 and DHX15.

Its subcellular location is the nucleus. It is found in the nucleoplasm. The protein resides in the nucleolus. Functionally, involved in pre-mRNA splicing through regulating spliceosome C complex formation. May play a role during late-stage splicing events and turnover of excised introns. This Mus musculus (Mouse) protein is Intron Large complex component GCFC2 (Gcfc2).